A 124-amino-acid chain; its full sequence is Small ribosomal subunit protein uS12 (124 aa).

Aspartate 89 bears the 3-methylthioaspartic acid mark. Residues aspartate 103 to lysine 124 are disordered. Positions asparagine 111–lysine 124 are enriched in basic residues.

Belongs to the universal ribosomal protein uS12 family. Part of the 30S ribosomal subunit. Contacts proteins S8 and S17. May interact with IF1 in the 30S initiation complex.

In terms of biological role, with S4 and S5 plays an important role in translational accuracy. Its function is as follows. Interacts with and stabilizes bases of the 16S rRNA that are involved in tRNA selection in the A site and with the mRNA backbone. Located at the interface of the 30S and 50S subunits, it traverses the body of the 30S subunit contacting proteins on the other side and probably holding the rRNA structure together. The combined cluster of proteins S8, S12 and S17 appears to hold together the shoulder and platform of the 30S subunit. This Desulforudis audaxviator (strain MP104C) protein is Small ribosomal subunit protein uS12.